Here is a 438-residue protein sequence, read N- to C-terminus: MAQFYSAKRRVTTRQTITVKVHDLDSFGQGVAHHNGKALFVQGALPDEVAEVSIIEDKRHFSRGVATRIVTASPQRVEPRCPHYSRCGGCQQQHASPTLQQESKAKALSRLLSKPRGETVEVDDIIASRPWGYRRRARLGLSFQPKSQTLHMGFREKSSSELVNISQCPILKPELNALLQPLHAVLSSLQAVRRLGHVELVQADSGSLLVLRHLDALTAEDRQKLERFSHQYRLSLFLAAESDTLEQVSGGMPHYQSHDLTLTFSPRDFIQVNDDVNQQMVARALAWLDLQPEDRVLDLFCGMGNFTLPMGKFAKNVVGVEGVAALVAKAGYNAELNCLNNVAFWQHNLEEDVSRQPWAVEGFNKVLLDPARAGAAGVMAHIIKIAPQRVVYVSCNPTTLARDSEILLTSGYQLERVTMLDMFPHTGHLESMVLFSRK.

In terms of domain architecture, TRAM spans 10-68 (RVTTRQTITVKVHDLDSFGQGVAHHNGKALFVQGALPDEVAEVSIIEDKRHFSRGVATR). [4Fe-4S] cluster contacts are provided by cysteine 81, cysteine 87, cysteine 90, and cysteine 168. S-adenosyl-L-methionine contacts are provided by glutamine 271, phenylalanine 300, asparagine 305, glutamate 321, asparagine 348, and aspartate 369. The Nucleophile role is filled by cysteine 395.

This sequence belongs to the class I-like SAM-binding methyltransferase superfamily. RNA M5U methyltransferase family. RlmD subfamily.

The enzyme catalyses uridine(1939) in 23S rRNA + S-adenosyl-L-methionine = 5-methyluridine(1939) in 23S rRNA + S-adenosyl-L-homocysteine + H(+). Functionally, catalyzes the formation of 5-methyl-uridine at position 1939 (m5U1939) in 23S rRNA. The polypeptide is 23S rRNA (uracil(1939)-C(5))-methyltransferase RlmD (Erwinia tasmaniensis (strain DSM 17950 / CFBP 7177 / CIP 109463 / NCPPB 4357 / Et1/99)).